The following is a 244-amino-acid chain: L-xylulose reductase (244 aa).

Met-1 bears the N-acetylmethionine mark. 11 to 39 (LVTGAGKGIGRSTVLALKAAGAQVVAVSR) contributes to the NADP(+) binding site. Arg-21 is modified (omega-N-methylarginine). Ser-136 contacts substrate. Tyr-149 functions as the Proton acceptor in the catalytic mechanism. Lys-153 is a catalytic residue.

This sequence belongs to the short-chain dehydrogenases/reductases (SDR) family. In terms of assembly, homotetramer. Highly expressed in kidney, liver and epididymis. Expressed at intermediate level in lung. Weakly or not expressed in brain, heart, spleen and testis.

Its subcellular location is the membrane. It localises to the apical cell membrane. It carries out the reaction xylitol + NADP(+) = L-xylulose + NADPH + H(+). Functionally, catalyzes the NADPH-dependent reduction of several pentoses, tetroses, trioses, alpha-dicarbonyl compounds and L-xylulose. Participates in the uronate cycle of glucose metabolism. May play a role in the water absorption and cellular osmoregulation in the proximal renal tubules by producing xylitol, an osmolyte, thereby preventing osmolytic stress from occurring in the renal tubules. In Mus musculus (Mouse), this protein is L-xylulose reductase (Dcxr).